Reading from the N-terminus, the 197-residue chain is Protein RESISTANCE TO PHYTOPHTHORA 1, chloroplastic (197 aa).

The transit peptide at 1–52 directs the protein to the chloroplast; the sequence is MSWSLCSTHGVSSSIALTYGFRHRRRSTFRIFATSDGLEPKDDPPESPLPSS. The tract at residues 35 to 56 is disordered; the sequence is SDGLEPKDDPPESPLPSSSSAL. The next 4 membrane-spanning stretches (helical) occupy residues 93-113, 120-140, 150-170, and 173-193; these read FEVQ…NLLF, LWRL…LRAR, LNYL…FWKS, and LVWS…LGWL.

Its subcellular location is the plastid. The protein resides in the chloroplast. It localises to the membrane. Functionally, plays a positive role in the immune response to the oomycetes P.brassicae, including induced oxidative burst (e.g. H(2)O(2)) and enhanced expression of defense-related genes. The polypeptide is Protein RESISTANCE TO PHYTOPHTHORA 1, chloroplastic (Arabidopsis thaliana (Mouse-ear cress)).